Here is a 365-residue protein sequence, read N- to C-terminus: DNA replication and repair protein RecF (365 aa).

23–30 (GPNGIGKS) provides a ligand contact to ATP.

This sequence belongs to the RecF family.

The protein localises to the cytoplasm. Its function is as follows. The RecF protein is involved in DNA metabolism; it is required for DNA replication and normal SOS inducibility. RecF binds preferentially to single-stranded, linear DNA. It also seems to bind ATP. The polypeptide is DNA replication and repair protein RecF (Parasynechococcus marenigrum (strain WH8102)).